A 60-amino-acid chain; its full sequence is MTYCHTDVSYFEIQHSCIFSLLSLVVERCTCNAKVASSILAGGIIPVLFFFPLFLFLYHL.

The helical transmembrane segment at 38–58 threads the bilayer; the sequence is SILAGGIIPVLFFFPLFLFLY.

It localises to the membrane. This is an uncharacterized protein from Saccharomyces cerevisiae (strain ATCC 204508 / S288c) (Baker's yeast).